The chain runs to 692 residues: MAERKTPLHKVRNIGIAAHIDAGKTTTSERILFFTGMSHKIGEVHDGAATMDWMEQEKERGITITSAATTAFWKGYQVNLIDTPGHVDFTIEVERSMRVLDGAVAVFCSVGGVQPQSETVWRQANKYHVPRIVFVNKMDRIGANFFRVEEQIRERLKANPVPIQIPIGAEDNFKGVVDLVRMKAYVWNDEKKPTDYVEEEIPAEVKDKAEEYRAKLIEAVSETDDSLMEKFFAGEELTEEEIKKGIKAGCLRMTITPMLCGTAFKNKGIQPLLDAVVDYLPAPDEIAAINGVYEDGTEVTVESTDDGEFAALAFKIMTDPFVGQLTFIRVYRGSLESGSYAYNTVQDCKERIGRLLKMHSNKREEITELFAGEIGAVVGLKNTLTGDTLASEKDKVILERMDFPEPVISVAVEPKTKADQEKMAIALQKLAQEDPSFRVSTDEESGQTIISGMGELHLEIIVDRMLREFKVDAEVGQPQVAYRETIRKAVEQEYKYAKQSGGRGQYGHVFLRIEPLPAASGFEFVNDIKGGVVPKEYIPAVEKGCKEALQSGVLAGYPVEDVKVTLFDGSYHEVDSSEMAFKLAASMGFKEGARKAGAVILEPMMKVEVETPEEYMGDVIGDLNKRRGQVNSMDDRNGVKIIAAYCPLAQMFGYSTDLRSMTQGRATYSMEFDHYEEVPKNVSEEIIKKRNG.

Residues 9 to 284 (HKVRNIGIAA…AVVDYLPAPD (276 aa)) enclose the tr-type G domain. Residues 18–25 (AHIDAGKT), 82–86 (DTPGH), and 136–139 (NKMD) each bind GTP.

The protein belongs to the TRAFAC class translation factor GTPase superfamily. Classic translation factor GTPase family. EF-G/EF-2 subfamily.

Its subcellular location is the cytoplasm. In terms of biological role, catalyzes the GTP-dependent ribosomal translocation step during translation elongation. During this step, the ribosome changes from the pre-translocational (PRE) to the post-translocational (POST) state as the newly formed A-site-bound peptidyl-tRNA and P-site-bound deacylated tRNA move to the P and E sites, respectively. Catalyzes the coordinated movement of the two tRNA molecules, the mRNA and conformational changes in the ribosome. The chain is Elongation factor G from Campylobacter concisus (strain 13826).